Here is a 500-residue protein sequence, read N- to C-terminus: Arabinofuranosidase/B-xylosidase (500 aa).

The N-terminal stretch at 1 to 21 (MLSNARIIAAGCIAAGSLVAA) is a signal peptide. An N-linked (GlcNAc...) asparagine glycan is attached at N467.

The protein belongs to the glycosyl hydrolase 54 family.

The enzyme catalyses Hydrolysis of terminal non-reducing alpha-L-arabinofuranoside residues in alpha-L-arabinosides.. It catalyses the reaction Hydrolysis of (1-&gt;4)-beta-D-xylans, to remove successive D-xylose residues from the non-reducing termini.. The sequence is that of Arabinofuranosidase/B-xylosidase (xyl1) from Trichoderma koningii (Hypocrea koningii).